A 426-amino-acid polypeptide reads, in one-letter code: Glucose-6-phosphate isomerase (426 aa).

The active-site Proton donor is the glutamate 282. Active-site residues include histidine 303 and lysine 417.

It belongs to the GPI family.

It is found in the cytoplasm. The enzyme catalyses alpha-D-glucose 6-phosphate = beta-D-fructose 6-phosphate. Its pathway is carbohydrate biosynthesis; gluconeogenesis. It functions in the pathway carbohydrate degradation; glycolysis; D-glyceraldehyde 3-phosphate and glycerone phosphate from D-glucose: step 2/4. Functionally, catalyzes the reversible isomerization of glucose-6-phosphate to fructose-6-phosphate. This Aster yellows witches'-broom phytoplasma (strain AYWB) protein is Glucose-6-phosphate isomerase.